The primary structure comprises 164 residues: Endoribonuclease YbeY (164 aa).

Zn(2+) contacts are provided by H120, H124, and H130.

Belongs to the endoribonuclease YbeY family. It depends on Zn(2+) as a cofactor.

The protein resides in the cytoplasm. Its function is as follows. Single strand-specific metallo-endoribonuclease involved in late-stage 70S ribosome quality control and in maturation of the 3' terminus of the 16S rRNA. This chain is Endoribonuclease YbeY, found in Acidothermus cellulolyticus (strain ATCC 43068 / DSM 8971 / 11B).